The following is a 300-amino-acid chain: Cation-efflux pump FieF (300 aa).

The next 4 helical transmembrane spans lie at 12 to 32 (AAIA…FAWW), 39 to 59 (ILAA…NLLV), 82 to 102 (AALA…LTGI), and 114 to 134 (PGVG…LVSF). Residues D45 and D49 each coordinate Zn(2+). Positions 153 and 157 each coordinate Zn(2+). A run of 2 helical transmembrane segments spans residues 156–176 (SDVM…YGWH) and 178–198 (ADAL…LRMG).

The protein belongs to the cation diffusion facilitator (CDF) transporter (TC 2.A.4) family. FieF subfamily. As to quaternary structure, homodimer.

The protein localises to the cell inner membrane. The enzyme catalyses Zn(2+)(in) + H(+)(out) = Zn(2+)(out) + H(+)(in). It carries out the reaction Cd(2+)(in) + H(+)(out) = Cd(2+)(out) + H(+)(in). It catalyses the reaction Fe(2+)(in) + H(+)(out) = Fe(2+)(out) + H(+)(in). Functionally, divalent metal cation transporter which exports Zn(2+), Cd(2+) and possibly Fe(2+). May be involved in zinc and iron detoxification by efflux. The chain is Cation-efflux pump FieF from Shigella flexneri serotype 5b (strain 8401).